The chain runs to 879 residues: Alanine--tRNA ligase (879 aa).

Zn(2+)-binding residues include histidine 566, histidine 570, cysteine 668, and histidine 672.

This sequence belongs to the class-II aminoacyl-tRNA synthetase family. Zn(2+) is required as a cofactor.

The protein localises to the cytoplasm. It catalyses the reaction tRNA(Ala) + L-alanine + ATP = L-alanyl-tRNA(Ala) + AMP + diphosphate. Functionally, catalyzes the attachment of alanine to tRNA(Ala) in a two-step reaction: alanine is first activated by ATP to form Ala-AMP and then transferred to the acceptor end of tRNA(Ala). Also edits incorrectly charged Ser-tRNA(Ala) and Gly-tRNA(Ala) via its editing domain. The protein is Alanine--tRNA ligase of Halalkalibacterium halodurans (strain ATCC BAA-125 / DSM 18197 / FERM 7344 / JCM 9153 / C-125) (Bacillus halodurans).